A 597-amino-acid polypeptide reads, in one-letter code: DDB1- and CUL4-associated factor 8 (597 aa).

A compositionally biased stretch (polar residues) spans 1 to 24; sequence MSSKGSSTDGRTDLANGSLSSSPE. Residues 1-147 form a disordered region; sequence MSSKGSSTDG…DWVSSETSAL (147 aa). A phosphoserine mark is found at Ser-21 and Ser-22. Positions 39-50 match the Nuclear export signal motif; sequence IEVEASDLSLSL. The segment covering 65–99 has biased composition (basic and acidic residues); the sequence is RGTDTESSGEDKDSDSMEDTGHYSINDENRVHDRS. Position 99 is a phosphoserine (Ser-99). Over residues 100–112 the composition is skewed to acidic residues; sequence EEEEEEEEEEEEE. Residues 114–122 carry the Nuclear localization signal motif; the sequence is PRRRVQRKR. Residues 124 to 137 show a composition bias toward basic and acidic residues; the sequence is NRDQDSSDDERALE. A phosphoserine mark is found at Ser-129 and Ser-130. WD repeat units lie at residues 191 to 230, 234 to 275, 281 to 321, 329 to 369, 385 to 424, 432 to 472, and 476 to 515; these read GHTG…PVLD, GHKS…CCKN, QHKG…PASK, EKKV…ENEN, ESKA…GAQY, RNNA…IIQF, and DKGG…STEL. An Omega-N-methylarginine; by PRMT1 modification is found at Arg-204. The interval 558–597 is disordered; sequence HRRWREPGVGATDADSDESPSSSDTSDEEEGPDRVQCMPS.

This sequence belongs to the WD repeat DCAF8 family. Interacts with DDB1, CUL4A and CUL4B. Interacts with KPNA1, KPNB1 and XPO1.

It localises to the nucleus. Its subcellular location is the cytoplasm. Its pathway is protein modification; protein ubiquitination. Functionally, may function as a substrate receptor for CUL4-DDB1 E3 ubiquitin-protein ligase complex. The chain is DDB1- and CUL4-associated factor 8 (DCAF8) from Homo sapiens (Human).